A 421-amino-acid polypeptide reads, in one-letter code: Anhydromevalonate phosphate decarboxylase (421 aa).

Mn(2+) is bound by residues Asn-131 and Glu-194. Catalysis depends on Asp-240, which acts as the Proton acceptor.

Belongs to the UbiD family. It depends on prenylated FMN as a cofactor. Mn(2+) is required as a cofactor.

It catalyses the reaction (2E)-3-methyl-5-phosphooxypent-2-enoate + H(+) = isopentenyl phosphate + CO2. It functions in the pathway isoprenoid biosynthesis; isopentenyl diphosphate biosynthesis via mevalonate pathway. Catalyzes the conversion of trans-anhydromevalonate 5-phosphate (tAHMP) into isopentenyl phosphate. Involved in the archaeal mevalonate (MVA) pathway, which provides fundamental precursors for isoprenoid biosynthesis, such as isopentenyl diphosphate (IPP) and dimethylallyl diphosphate (DMAPP). This chain is Anhydromevalonate phosphate decarboxylase, found in Methanocaldococcus jannaschii (strain ATCC 43067 / DSM 2661 / JAL-1 / JCM 10045 / NBRC 100440) (Methanococcus jannaschii).